The primary structure comprises 567 residues: Urease subunit alpha (567 aa).

The 439-residue stretch at 129–567 folds into the Urease domain; the sequence is GGIDAHIHFI…LPMAQRYFLF (439 aa). Ni(2+) contacts are provided by His134, His136, and Lys217. Lys217 is modified (N6-carboxylysine). Position 219 (His219) interacts with substrate. Residues His246 and His272 each coordinate Ni(2+). Catalysis depends on His320, which acts as the Proton donor. A Ni(2+)-binding site is contributed by Asp360.

This sequence belongs to the metallo-dependent hydrolases superfamily. Urease alpha subunit family. As to quaternary structure, heterotrimer of UreA (gamma), UreB (beta) and UreC (alpha) subunits. Three heterotrimers associate to form the active enzyme. It depends on Ni cation as a cofactor. In terms of processing, carboxylation allows a single lysine to coordinate two nickel ions.

Its subcellular location is the cytoplasm. It catalyses the reaction urea + 2 H2O + H(+) = hydrogencarbonate + 2 NH4(+). Its pathway is nitrogen metabolism; urea degradation; CO(2) and NH(3) from urea (urease route): step 1/1. In Teredinibacter turnerae (strain ATCC 39867 / T7901), this protein is Urease subunit alpha.